Consider the following 364-residue polypeptide: Methylthioribose-1-phosphate isomerase (364 aa).

Substrate is bound by residues R46–A48, R89, and Q196. The active-site Proton donor is the D237. N247–K248 is a substrate binding site.

The protein belongs to the eIF-2B alpha/beta/delta subunits family. MtnA subfamily.

The catalysed reaction is 5-(methylsulfanyl)-alpha-D-ribose 1-phosphate = 5-(methylsulfanyl)-D-ribulose 1-phosphate. Its pathway is amino-acid biosynthesis; L-methionine biosynthesis via salvage pathway; L-methionine from S-methyl-5-thio-alpha-D-ribose 1-phosphate: step 1/6. Its function is as follows. Catalyzes the interconversion of methylthioribose-1-phosphate (MTR-1-P) into methylthioribulose-1-phosphate (MTRu-1-P). The polypeptide is Methylthioribose-1-phosphate isomerase (Pelotomaculum thermopropionicum (strain DSM 13744 / JCM 10971 / SI)).